The following is a 454-amino-acid chain: tRNA modification GTPase MnmE (454 aa).

3 residues coordinate (6S)-5-formyl-5,6,7,8-tetrahydrofolate: arginine 23, glutamate 80, and lysine 120. The TrmE-type G domain occupies 216 to 377 (GMKVVIAGRP…LRDHLKQSMG (162 aa)). Asparagine 226 contributes to the K(+) binding site. Residues 226-231 (NAGKSS), 245-251 (TDIAGTT), 270-273 (DTAG), 335-338 (NKAD), and 358-360 (SAR) contribute to the GTP site. Position 230 (serine 230) interacts with Mg(2+). K(+) is bound by residues threonine 245, isoleucine 247, and threonine 250. Residue threonine 251 coordinates Mg(2+). Lysine 454 is a (6S)-5-formyl-5,6,7,8-tetrahydrofolate binding site.

It belongs to the TRAFAC class TrmE-Era-EngA-EngB-Septin-like GTPase superfamily. TrmE GTPase family. As to quaternary structure, homodimer. Heterotetramer of two MnmE and two MnmG subunits. K(+) is required as a cofactor.

Its subcellular location is the cytoplasm. Its function is as follows. Exhibits a very high intrinsic GTPase hydrolysis rate. Involved in the addition of a carboxymethylaminomethyl (cmnm) group at the wobble position (U34) of certain tRNAs, forming tRNA-cmnm(5)s(2)U34. The protein is tRNA modification GTPase MnmE of Pectobacterium carotovorum subsp. carotovorum (strain PC1).